The primary structure comprises 154 residues: Ribonuclease H (154 aa).

The RNase H type-1 domain maps to Glu-3–Ala-144. The Mg(2+) site is built by Asp-12, Glu-50, Asp-72, and Asp-136.

It belongs to the RNase H family. Monomer. It depends on Mg(2+) as a cofactor.

It localises to the cytoplasm. The catalysed reaction is Endonucleolytic cleavage to 5'-phosphomonoester.. In terms of biological role, endonuclease that specifically degrades the RNA of RNA-DNA hybrids. The chain is Ribonuclease H from Bradyrhizobium sp. (strain ORS 278).